The chain runs to 101 residues: Urease subunit beta (101 aa).

It belongs to the urease beta subunit family. Heterotrimer of UreA (gamma), UreB (beta) and UreC (alpha) subunits. Three heterotrimers associate to form the active enzyme.

It is found in the cytoplasm. It carries out the reaction urea + 2 H2O + H(+) = hydrogencarbonate + 2 NH4(+). The protein operates within nitrogen metabolism; urea degradation; CO(2) and NH(3) from urea (urease route): step 1/1. The sequence is that of Urease subunit beta from Polaromonas naphthalenivorans (strain CJ2).